Here is a 786-residue protein sequence, read N- to C-terminus: Mitochondrial intermediate peptidase (786 aa).

The N-terminal 29 residues, 1–29 (MSSILLRSYRHHAKVWTRPSSKSSFIRSL), are a transit peptide targeting the mitochondrion. Histidine 567 serves as a coordination point for Zn(2+). Glutamate 568 is a catalytic residue. Zn(2+) contacts are provided by histidine 571 and histidine 574.

The protein belongs to the peptidase M3 family. It depends on Zn(2+) as a cofactor.

The protein localises to the mitochondrion matrix. It carries out the reaction Release of an N-terminal octapeptide as second stage of processing of some proteins imported into the mitochondrion.. Functionally, cleaves proteins, imported into the mitochondrion, to their mature size. While most mitochondrial precursor proteins are processed to the mature form in one step by mitochondrial processing peptidase (MPP), the sequential cleavage by MIP of an octapeptide after initial processing by MPP is a required step for a subgroup of nuclear-encoded precursor proteins destined for the matrix or the inner membrane. The protein is Mitochondrial intermediate peptidase (OCT1) of Meyerozyma guilliermondii (strain ATCC 6260 / CBS 566 / DSM 6381 / JCM 1539 / NBRC 10279 / NRRL Y-324) (Yeast).